The sequence spans 356 residues: Phospho-N-acetylmuramoyl-pentapeptide-transferase (356 aa).

10 consecutive transmembrane segments (helical) span residues 27–47 (ATLMTALVIGLIIGPRFINML), 73–93 (TMGGLMIIVSLVLSLVLWMDL), 97–117 (FVWACLAVTVGFGLIGFLDDL), 138–158 (FLVAGIASYIIVSQINTWLYV), 165–185 (AIPLGPFYYVFAAVVIVGAGN), 195–215 (GLAIMPVIIAAGTFAIIAYLA), 232–252 (AGELAIFCAAIMGAGLAFLWF), 258–278 (AVFMGDTGSLALGGALGAIAV), 284–304 (IVLAIVGGLFVFEALSVIIQV), and 333–353 (KVVIRFWIVSIVLALMGLATL).

This sequence belongs to the glycosyltransferase 4 family. MraY subfamily. Mg(2+) serves as cofactor.

It is found in the cell inner membrane. It catalyses the reaction UDP-N-acetyl-alpha-D-muramoyl-L-alanyl-gamma-D-glutamyl-meso-2,6-diaminopimeloyl-D-alanyl-D-alanine + di-trans,octa-cis-undecaprenyl phosphate = di-trans,octa-cis-undecaprenyl diphospho-N-acetyl-alpha-D-muramoyl-L-alanyl-D-glutamyl-meso-2,6-diaminopimeloyl-D-alanyl-D-alanine + UMP. Its pathway is cell wall biogenesis; peptidoglycan biosynthesis. Catalyzes the initial step of the lipid cycle reactions in the biosynthesis of the cell wall peptidoglycan: transfers peptidoglycan precursor phospho-MurNAc-pentapeptide from UDP-MurNAc-pentapeptide onto the lipid carrier undecaprenyl phosphate, yielding undecaprenyl-pyrophosphoryl-MurNAc-pentapeptide, known as lipid I. This Erythrobacter litoralis (strain HTCC2594) protein is Phospho-N-acetylmuramoyl-pentapeptide-transferase.